We begin with the raw amino-acid sequence, 171 residues long: Protein X (171 aa).

The next 3 helical transmembrane spans lie at 11-31, 38-58, and 73-93; these read SWYQIFIAFSLTYTPIAIYSL, LAGIVNIFIFINCCVSFVYLM, and AVIALVWGIYTLVKIVDWLVI.

It is found in the virion membrane. The sequence is that of Protein X (VPX) from Mus musculus domesticus (western European house mouse).